The sequence spans 370 residues: 3-isopropylmalate dehydrogenase (370 aa).

77–90 is a binding site for NAD(+); sequence GPKWDSVPYEVRPE. Residues arginine 97, arginine 107, arginine 135, and aspartate 226 each contribute to the substrate site. 3 residues coordinate Mg(2+): aspartate 226, aspartate 250, and aspartate 254. 290–302 is a binding site for NAD(+); the sequence is GSAPDIAGKGIAN.

This sequence belongs to the isocitrate and isopropylmalate dehydrogenases family. LeuB type 1 subfamily. In terms of assembly, homodimer. Mg(2+) serves as cofactor. It depends on Mn(2+) as a cofactor.

It localises to the cytoplasm. It catalyses the reaction (2R,3S)-3-isopropylmalate + NAD(+) = 4-methyl-2-oxopentanoate + CO2 + NADH. Its pathway is amino-acid biosynthesis; L-leucine biosynthesis; L-leucine from 3-methyl-2-oxobutanoate: step 3/4. In terms of biological role, catalyzes the oxidation of 3-carboxy-2-hydroxy-4-methylpentanoate (3-isopropylmalate) to 3-carboxy-4-methyl-2-oxopentanoate. The product decarboxylates to 4-methyl-2 oxopentanoate. The sequence is that of 3-isopropylmalate dehydrogenase from Rhizobium etli (strain ATCC 51251 / DSM 11541 / JCM 21823 / NBRC 15573 / CFN 42).